Reading from the N-terminus, the 1235-residue chain is MFGDLFEEEYSTVSNNQYGKGKKLKTKALEPPAPREFTNLSGIRNQGGTCYLNSLLQTLHFTPEFREALFSLGPEELGLFEDKDKPDAKVRIIPLQLQRLFAQLLLLDQEAASTADLTDSFGWTSNEEMRQHDVQELNRILFSALETSLVGTSGHDLIYRLYHGTIVNQIVCKECKNVSERQEDFLDLTVAVKNVSGLEDALWNMYVEEEVFDCDNLYHCGTCDRLVKAAKSAKLRKLPPFLTVSLLRFNFDFVKCERYKETSCYTFPLRINLKPFCEQSELDDLEYIYDLFSVIIHKGGCYGGHYHVYIKDVDHLGNWQFQEEKSKPDVNLKDLQSEEEIDHPLMILKAILLEENNLIPVDQLGQKLLKKIGISWNKKYRKQHGPLRKFLQLHSQIFLLSSDESTVRLLKNSSLQAESDFQRNDQQIFKMLPPESPGLNNSISCPHWFDINDSKVQPIREKDIEQQFQGKESAYMLFYRKSQLQRPPEARANPRYGVPCHLLNEMDAANIELQTKRAECDSANNTFELHLHLGPQYHFFNGALHPVVSQTESVWDLTFDKRKTLGDLRQSIFQLLEFWEGDMVLSVAKLVPAGLHIYQSLGGDELTLCETEIADGEDIFVWNGVEVGGVHIQTGIDCEPLLLNVLHLDTSSDGEKCCQVIESPHVFPANAEVGTVLTALAIPAGVIFINSAGCPGGEGWTAIPKEDMRKTFREQGLRNGSSILIQDSHDDNSLLTKEEKWVTSMNEIDWLHVKNLCQLESEEKQVKISATVNTMVFDIRIKAIKELKLMKELADNSCLRPIDRNGKLLCPVPDSYTLKEAELKMGSSLGLCLGKAPSSSQLFLFFAMGSDVQPGTEMEIVVEETISVRDCLKLMLKKSGLQGDAWHLRKMDWCYEAGEPLCEEDATLKELLICSGDTLLLIEGQLPPLGFLKVPIWWYQLQGPSGHWESHQDQTNCTSSWGRVWRATSSQGASGNEPAQVSLLYLGDIEISEDATLAELKSQAMTLPPFLEFGVPSPAHLRAWTVERKRPGRLLRTDRQPLREYKLGRRIEICLEPLQKGENLGPQDVLLRTQVRIPGERTYAPALDLVWNAAQGGTAGSLRQRVADFYRLPVEKIEIAKYFPEKFEWLPISSWNQQITKRKKKKKQDYLQGAPYYLKDGDTIGVKNLLIDDDDDFSTIRDDTGKEKQKQRALGRRKSQEALHEQSSYILSSAETPARPRAPETSLSIHVGSFR.

The USP domain maps to 41–482 (SGIRNQGGTC…SAYMLFYRKS (442 aa)). C50 serves as the catalytic Nucleophile. The active-site Proton acceptor is the H305. A compositionally biased stretch (basic and acidic residues) spans 1180 to 1190 (IRDDTGKEKQK). The interval 1180 to 1235 (IRDDTGKEKQKQRALGRRKSQEALHEQSSYILSSAETPARPRAPETSLSIHVGSFR) is disordered. Residues 1205-1215 (EQSSYILSSAE) are compositionally biased toward polar residues.

Belongs to the peptidase C19 family. As to expression, broadly expressed.

It catalyses the reaction Thiol-dependent hydrolysis of ester, thioester, amide, peptide and isopeptide bonds formed by the C-terminal Gly of ubiquitin (a 76-residue protein attached to proteins as an intracellular targeting signal).. Functionally, may be catalytically inactive. The protein is Ubiquitin carboxyl-terminal hydrolase 40 (USP40) of Homo sapiens (Human).